The primary structure comprises 403 residues: SEC14-like protein 2 (403 aa).

2 positions are modified to N6-succinyllysine: Lys-11 and Lys-51. The CRAL-TRIO domain maps to 76 to 249 (PPEVIQQYLS…EYGGTMTDPD (174 aa)). 2 positions are modified to N6-succinyllysine: Lys-253 and Lys-257. Residues 275-383 (KQQYEHSVQI…AKKVSFTVEV (109 aa)) form the GOLD domain. Lys-393 carries the post-translational modification N6-succinyllysine.

Monomer. As to expression, widely expressed. High expression in liver and small intestine.

It localises to the cytoplasm. Its subcellular location is the nucleus. Functionally, carrier protein. Binds to some hydrophobic molecules and promotes their transfer between the different cellular sites. Binds with high affinity to alpha-tocopherol. Also binds with a weaker affinity to other tocopherols and to tocotrienols. May have a transcriptional activatory activity via its association with alpha-tocopherol. Probably recognizes and binds some squalene structure, suggesting that it may regulate cholesterol biosynthesis by increasing the transfer of squalene to a metabolic active pool in the cell. This Rattus norvegicus (Rat) protein is SEC14-like protein 2 (Sec14l2).